The primary structure comprises 499 residues: Glycerol kinase (499 aa).

T14 provides a ligand contact to ADP. Residues T14, T15, and S16 each contribute to the ATP site. Position 14 (T14) interacts with sn-glycerol 3-phosphate. ADP is bound at residue R18. Residues R84, E85, Y136, and D245 each contribute to the sn-glycerol 3-phosphate site. 5 residues coordinate glycerol: R84, E85, Y136, D245, and Q246. ADP contacts are provided by T267 and G310. Residues T267, G310, Q314, and G411 each coordinate ATP. Residues G411 and N415 each coordinate ADP.

Belongs to the FGGY kinase family.

The catalysed reaction is glycerol + ATP = sn-glycerol 3-phosphate + ADP + H(+). The protein operates within polyol metabolism; glycerol degradation via glycerol kinase pathway; sn-glycerol 3-phosphate from glycerol: step 1/1. Inhibited by fructose 1,6-bisphosphate (FBP). In terms of biological role, key enzyme in the regulation of glycerol uptake and metabolism. Catalyzes the phosphorylation of glycerol to yield sn-glycerol 3-phosphate. The polypeptide is Glycerol kinase (Nitrosomonas eutropha (strain DSM 101675 / C91 / Nm57)).